Consider the following 254-residue polypeptide: Alcohol dehydrogenase (254 aa).

9 to 32 is a binding site for NAD(+); sequence IFVAGLGGIGLDTSRELVKRDLKN. Substrate is bound at residue Ser-138. The active-site Proton acceptor is Tyr-151.

Belongs to the short-chain dehydrogenases/reductases (SDR) family. Homodimer.

The enzyme catalyses a primary alcohol + NAD(+) = an aldehyde + NADH + H(+). The catalysed reaction is a secondary alcohol + NAD(+) = a ketone + NADH + H(+). In Drosophila paulistorum (Fruit fly), this protein is Alcohol dehydrogenase (Adh).